The sequence spans 302 residues: ATP synthase subunit b 1 (302 aa).

A helical membrane pass occupies residues tryptophan 5–leucine 22. The segment at glycine 278–alanine 302 is disordered.

This sequence belongs to the ATPase B chain family. As to quaternary structure, F-type ATPases have 2 components, F(1) - the catalytic core - and F(0) - the membrane proton channel. F(1) has five subunits: alpha(3), beta(3), gamma(1), delta(1), epsilon(1). F(0) has three main subunits: a(1), b(2) and c(10-14). The alpha and beta chains form an alternating ring which encloses part of the gamma chain. F(1) is attached to F(0) by a central stalk formed by the gamma and epsilon chains, while a peripheral stalk is formed by the delta and b chains.

It localises to the cell inner membrane. F(1)F(0) ATP synthase produces ATP from ADP in the presence of a proton or sodium gradient. F-type ATPases consist of two structural domains, F(1) containing the extramembraneous catalytic core and F(0) containing the membrane proton channel, linked together by a central stalk and a peripheral stalk. During catalysis, ATP synthesis in the catalytic domain of F(1) is coupled via a rotary mechanism of the central stalk subunits to proton translocation. Its function is as follows. Component of the F(0) channel, it forms part of the peripheral stalk, linking F(1) to F(0). The polypeptide is ATP synthase subunit b 1 (Pseudoalteromonas atlantica (strain T6c / ATCC BAA-1087)).